We begin with the raw amino-acid sequence, 281 residues long: Protein-S-isoprenylcysteine O-methyltransferase (281 aa).

Residues 1 to 2 (ML) lie on the Cytoplasmic side of the membrane. Residues 3–29 (SPAGKISLQSFTGSSLVFFVICMFNHY) traverse the membrane as a helical segment. Topologically, residues 30-35 (YGITNL) are lumenal. The chain crosses the membrane as a helical span at residues 36 to 53 (VVNTLIVFFYAVNVYFFL). Topologically, residues 54-58 (KFFYN) are cytoplasmic. Residues 59 to 85 (EFAFAIAIRAAFLGLVLVLGLYIKLVA) traverse the membrane as a helical segment. The Lumenal segment spans residues 86-88 (PPN). Residues 89–113 (IQIFGGYMSVMALFHYSEFLAIAIV) form a helical membrane-spanning segment. Residues 114 to 118 (QPKQV) lie on the Cytoplasmic side of the membrane. A helical transmembrane segment spans residues 119-149 (STDSFVINHSPQYTIAAVSSWVEFFIETYFF). Residues 150-155 (PGLKEI) are Lumenal-facing. A helical transmembrane segment spans residues 156–181 (HWLSNIGLCVCILGEVLRKTAILTAG). The Cytoplasmic portion of the chain corresponds to 182–208 (SNFNHLVQCEKSSDHVLVTHGVYAWFR). S-adenosyl-L-methionine contacts are provided by residues glutamine 189, 196–199 (HVLV), tyrosine 204, and 209–212 (HPSY). The helical transmembrane segment at 209–226 (HPSYVGWFYWSIGTQIIL) threads the bilayer. Topologically, residues 227 to 229 (INP) are lumenal. The chain crosses the membrane as a helical span at residues 230–243 (LCIPAYTLASWMFF). The Cytoplasmic segment spans residues 244 to 281 (KERIYIEESMLLSFFGQQYCDYQQQVGTGIPFIEGYKI). Substrate is bound at residue arginine 246. Glutamate 250 is a binding site for S-adenosyl-L-methionine.

Belongs to the class VI-like SAM-binding methyltransferase superfamily. Isoprenylcysteine carboxyl methyltransferase family.

It localises to the endoplasmic reticulum membrane. The catalysed reaction is [protein]-C-terminal S-[(2E,6E)-farnesyl]-L-cysteine + S-adenosyl-L-methionine = [protein]-C-terminal S-[(2E,6E)-farnesyl]-L-cysteine methyl ester + S-adenosyl-L-homocysteine. Its function is as follows. Catalyzes the post-translational methylation of isoprenylated C-terminal cysteine residues. The sequence is that of Protein-S-isoprenylcysteine O-methyltransferase from Tribolium castaneum (Red flour beetle).